The primary structure comprises 391 residues: Methyltransferase/ribosomally synthesized type I borosin cyclic peptide precursor cmaMA (391 aa).

The tract at residues 1-253 (MDATANPKAG…TISTFYLPPK (253 aa)) is methyltransferase domain. Residues Arg-72, Tyr-76, and Tyr-98 contribute to the active site. 8 residues coordinate S-adenosyl-L-methionine: Tyr-98, His-100, Val-103, Ala-130, Gln-172, Ala-215, Ser-246, and Thr-247. The segment at 254–373 (APSAKVSLNR…AQLSGALKEG (120 aa)) is clasp domain. Residues 374–376 (GVP) are precursor leader. The residue at position 382 (Leu-382) is an N-methylleucine. Phe-385 and Phe-386 each carry N-methylphenylalanine. N-methylisoleucine is present on residues Ile-387 and Ile-388.

This sequence in the N-terminal section; belongs to the precorrin methyltransferase family. Homodimer. Post-translationally, cmaMA automethylates at Leu-382, Phe-385, Phe-386, Ile-387 and Ile-388 before being processed by the prolyloligopeptidase ledP which likely forms a peptidyl ester upon removal of the follower propeptide, which then undergoes macrocyclization with the N-terminus of the modified core peptide. Peptide backbone alpha-N-methylations change the physicochemical properties of amide bonds to provide structural constraints and other favorable characteristics including biological membrane permeability to peptides.

It functions in the pathway secondary metabolite biosynthesis. In terms of biological role, fusion protein of the methyltransferase cmaM and a type I borosin core peptide; part of the gene cluster that mediates the biosynthesis of a type I borosin, a highly methylated cyclic peptide with potent biological activities. Type I borosins derive from the C-terminus of the fusion protein, and it is the same protein that methylates its own C-terminus using S-adenosyl methionine (SAM). The C-terminus is subsequently cleaved off and macrocyclized by a prolyloligopeptidase to give the final product. This is Methyltransferase/ribosomally synthesized type I borosin cyclic peptide precursor cmaMA from Coprinopsis marcescibilis (Agaric fungus).